A 24-amino-acid chain; its full sequence is Small ribosomal subunit protein uS19 (24 aa).

The tract at residues 1–24 is disordered; it reads KLGEFSPTRTYRGHNKKDKKMQKK. Basic residues predominate over residues 11 to 24; the sequence is YRGHNKKDKKMQKK.

It belongs to the universal ribosomal protein uS19 family.

Functionally, protein S19 forms a complex with S13 that binds strongly to the 16S ribosomal RNA. This Phytoplasma sp. (strain STRAWB2) protein is Small ribosomal subunit protein uS19.